A 592-amino-acid polypeptide reads, in one-letter code: Cyclin-dependent kinase-like 3 (592 aa).

Positions 4 to 286 (YETLGKVGEG…SSDLLHHEYF (283 aa)) constitute a Protein kinase domain. Residues 10–18 (VGEGSYGTV) and K33 contribute to the ATP site. The short motif at 44-50 (NKIAMRE) is the [NKR]KIAxRE element. The Proton acceptor role is filled by D125. A Phosphothreonine modification is found at T158. At Y160 the chain carries Phosphotyrosine. A compositionally biased stretch (basic and acidic residues) spans 368–379 (GDISEPKKKEYE). Disordered stretches follow at residues 368–390 (GDIS…ANEN) and 459–485 (RAKK…PGPI). The segment covering 466–477 (SSQSIGQVMPNS) has biased composition (polar residues).

The protein belongs to the protein kinase superfamily. CMGC Ser/Thr protein kinase family. CDC2/CDKX subfamily.

It is found in the cytoplasm. It catalyses the reaction L-seryl-[protein] + ATP = O-phospho-L-seryl-[protein] + ADP + H(+). It carries out the reaction L-threonyl-[protein] + ATP = O-phospho-L-threonyl-[protein] + ADP + H(+). In Homo sapiens (Human), this protein is Cyclin-dependent kinase-like 3.